Reading from the N-terminus, the 391-residue chain is MVTQNKKILIITGSFGNGHLQVTQSVVNQFKEMNLDNLTVIEHDLFLEAHPILTSICKKWYINSFKYFRNMYKAFYYSQPDQLDKCFYKYYGLNKLMNLLLKEKPDLILLTFPTPVMSVLTEQFDMNIPIATVMTDYRMQKNWITPFSQRYYLATEELKDEFASIGIPKDKLKVTGIPISDKFETDIDKTAWLSQNHLDPDKPTILMSAGAFGVSKGFGQMIQEILNRSPHAQVVMICGKNKDLKRSLTSQFKDFNNVLILGYTKHMNEWMASSQLMITKPGGITISEALTRQIPMIFLDPAPGQELENAVYFEEKGYGRIANTPEAAIEQVAALTNAPTKLASMSESMDASRIPYSTYKLCKDLLNLLNHSSHYEEVYGKVPLYAKLFVK.

Belongs to the glycosyltransferase 28 family. UgtP subfamily.

It is found in the cell membrane. It carries out the reaction a 1,2-diacyl-3-O-(beta-D-glucopyranosyl)-sn-glycerol + UDP-alpha-D-glucose = a 1,2-diacyl-3-O-(beta-D-Glc-(1-&gt;6)-beta-D-Glc)-sn-glycerol + UDP + H(+). The enzyme catalyses a 1,2-diacyl-sn-glycerol + UDP-alpha-D-glucose = a 1,2-diacyl-3-O-(beta-D-glucopyranosyl)-sn-glycerol + UDP + H(+). It functions in the pathway glycolipid metabolism; diglucosyl-diacylglycerol biosynthesis. Functionally, processive glucosyltransferase involved in the biosynthesis of both the bilayer- and non-bilayer-forming membrane glucolipids. Is able to successively transfer two glucosyl residues to diacylglycerol (DAG), thereby catalyzing the formation of beta-monoglucosyl-DAG (3-O-(beta-D-glucopyranosyl)-1,2-diacyl-sn-glycerol) and beta-diglucosyl-DAG (3-O-(beta-D-glucopyranosyl-beta-(1-&gt;6)-D-glucopyranosyl)-1,2-diacyl-sn-glycerol). Beta-diglucosyl-DAG is the predominant glycolipid found in Bacillales and is also used as a membrane anchor for lipoteichoic acid (LTA). The polypeptide is Processive diacylglycerol beta-glucosyltransferase (Staphylococcus saprophyticus subsp. saprophyticus (strain ATCC 15305 / DSM 20229 / NCIMB 8711 / NCTC 7292 / S-41)).